We begin with the raw amino-acid sequence, 349 residues long: uncharacterized protein (349 aa).

At Ser2 the chain carries Phosphoserine.

This is an uncharacterized protein from Saccharomyces cerevisiae (strain ATCC 204508 / S288c) (Baker's yeast).